A 344-amino-acid chain; its full sequence is Phenylalanine--tRNA ligase alpha subunit (344 aa).

Residue E256 coordinates Mg(2+).

Belongs to the class-II aminoacyl-tRNA synthetase family. Phe-tRNA synthetase alpha subunit type 1 subfamily. In terms of assembly, tetramer of two alpha and two beta subunits. Requires Mg(2+) as cofactor.

The protein localises to the cytoplasm. It carries out the reaction tRNA(Phe) + L-phenylalanine + ATP = L-phenylalanyl-tRNA(Phe) + AMP + diphosphate + H(+). This Geobacillus kaustophilus (strain HTA426) protein is Phenylalanine--tRNA ligase alpha subunit.